The sequence spans 211 residues: Cytochrome c biogenesis ATP-binding export protein CcmA (211 aa).

The region spanning 8–210 (LEAKNLQCER…EVRRIQLGAV (203 aa)) is the ABC transporter domain. Position 40-47 (40-47 (GPNGAGKT)) interacts with ATP.

The protein belongs to the ABC transporter superfamily. CcmA exporter (TC 3.A.1.107) family. The complex is composed of two ATP-binding proteins (CcmA) and two transmembrane proteins (CcmB).

It is found in the cell inner membrane. The catalysed reaction is heme b(in) + ATP + H2O = heme b(out) + ADP + phosphate + H(+). In terms of biological role, part of the ABC transporter complex CcmAB involved in the biogenesis of c-type cytochromes; once thought to export heme, this seems not to be the case, but its exact role is uncertain. Responsible for energy coupling to the transport system. This chain is Cytochrome c biogenesis ATP-binding export protein CcmA, found in Hahella chejuensis (strain KCTC 2396).